Consider the following 432-residue polypeptide: Adenylosuccinate synthetase (432 aa).

GTP is bound by residues 12 to 18 and 40 to 42; these read GDEGKGK and GHT. D13 functions as the Proton acceptor in the catalytic mechanism. 2 residues coordinate Mg(2+): D13 and G40. IMP contacts are provided by residues 13–16, 38–41, T132, R146, Q226, T241, and R305; these read DEGK and NAGH. H41 acts as the Proton donor in catalysis. 301-307 is a substrate binding site; sequence TVTGRKR. GTP is bound by residues R307, 333-335, and 415-417; these read KLD and STS.

It belongs to the adenylosuccinate synthetase family. Homodimer. Mg(2+) is required as a cofactor.

It localises to the cytoplasm. The enzyme catalyses IMP + L-aspartate + GTP = N(6)-(1,2-dicarboxyethyl)-AMP + GDP + phosphate + 2 H(+). It functions in the pathway purine metabolism; AMP biosynthesis via de novo pathway; AMP from IMP: step 1/2. Functionally, plays an important role in the de novo pathway of purine nucleotide biosynthesis. Catalyzes the first committed step in the biosynthesis of AMP from IMP. The protein is Adenylosuccinate synthetase of Agrobacterium fabrum (strain C58 / ATCC 33970) (Agrobacterium tumefaciens (strain C58)).